The following is a 149-amino-acid chain: Transcriptional regulator MraZ (149 aa).

SpoVT-AbrB domains are found at residues 6–52 (RSHR…PLPD) and 81–124 (AELM…DQGR).

It belongs to the MraZ family. Forms oligomers.

The protein localises to the cytoplasm. It is found in the nucleoid. The chain is Transcriptional regulator MraZ from Nitratidesulfovibrio vulgaris (strain DSM 19637 / Miyazaki F) (Desulfovibrio vulgaris).